The primary structure comprises 381 residues: Guanine nucleotide-binding protein G(olf) subunit alpha (381 aa).

Residues 1 to 25 form a disordered region; sequence MGCLGNSSKTAEDQGVDEKERREAN. A lipid anchor (N-palmitoyl glycine) is attached at G2. C3 is lipidated: S-palmitoyl cysteine. The span at 10–25 shows a compositional bias: basic and acidic residues; sequence TAEDQGVDEKERREAN. The 341-residue stretch at 41 to 381 folds into the G-alpha domain; that stretch reads ATHRLLLLGA…RMHLKQYELL (341 aa). The interval 44–57 is G1 motif; it reads RLLLLGAGESGKST. GTP-binding residues include E52, S53, G54, K55, S56, and T57. S56 contributes to the Mg(2+) binding site. Phosphothreonine is present on T178. The G2 motif stretch occupies residues 183–191; that stretch reads DLLRCRVLT. Residues L185, R186, and T191 each contribute to the GTP site. T191 and D210 together coordinate Mg(2+). The G3 motif stretch occupies residues 206-215; it reads FHMFDVGGQR. Residues G213, N279, K280, D282, and A353 each contribute to the GTP site. Residues 275 to 282 are G4 motif; that stretch reads ILFLNKQD. The interval 351–356 is G5 motif; that stretch reads TCAVDT.

The protein belongs to the G-alpha family. G(s) subfamily. As to quaternary structure, g proteins are composed of 3 units; alpha, beta and gamma. The alpha chain contains the guanine nucleotide binding site. Interacts with GAS2L2. Interacts (GDP-bound form) with RIC8B (via C-terminus); promoting GNAL folding and association with the plasma membrane.

The protein resides in the cell membrane. It catalyses the reaction GTP + H2O = GDP + phosphate + H(+). Its function is as follows. Guanine nucleotide-binding protein (G protein) involved as transducer in olfactory signal transduction controlled by G protein-coupled receptors (GPCRs). Contains the guanine nucleotide binding site and alternates between an active, GTP-bound state and an inactive, GDP-bound state. Signaling by an activated GPCR promotes GDP release and GTP binding. The alpha subunit has a low GTPase activity that converts bound GTP to GDP, thereby terminating the signal. Both GDP release and GTP hydrolysis are modulated by numerous regulatory proteins. GNAL/G(olf) alpha specifically mediates olfactory signal transduction within the olfactory neuroepithelium and the basal ganglia following GPCRs activation. Acts by promoting the specific activation of adenylyl cyclase ADCY3, resulting in increased levels of the signaling molecule cAMP. The protein is Guanine nucleotide-binding protein G(olf) subunit alpha of Mus musculus (Mouse).